We begin with the raw amino-acid sequence, 510 residues long: Probable cytosol aminopeptidase (510 aa).

Mn(2+) is bound by residues lysine 282 and aspartate 287. Lysine 294 is an active-site residue. Mn(2+) is bound by residues aspartate 305, aspartate 364, and glutamate 366. Arginine 368 is a catalytic residue.

The protein belongs to the peptidase M17 family. The cofactor is Mn(2+).

It is found in the cytoplasm. The catalysed reaction is Release of an N-terminal amino acid, Xaa-|-Yaa-, in which Xaa is preferably Leu, but may be other amino acids including Pro although not Arg or Lys, and Yaa may be Pro. Amino acid amides and methyl esters are also readily hydrolyzed, but rates on arylamides are exceedingly low.. The enzyme catalyses Release of an N-terminal amino acid, preferentially leucine, but not glutamic or aspartic acids.. Presumably involved in the processing and regular turnover of intracellular proteins. Catalyzes the removal of unsubstituted N-terminal amino acids from various peptides. This chain is Probable cytosol aminopeptidase, found in Cupriavidus metallidurans (strain ATCC 43123 / DSM 2839 / NBRC 102507 / CH34) (Ralstonia metallidurans).